We begin with the raw amino-acid sequence, 193 residues long: Thymidine kinase (193 aa).

ATP-binding positions include 9-16 (STMNAGKS) and 87-90 (DEAQ). The active-site Proton acceptor is the glutamate 88. Cysteine 145, cysteine 147, cysteine 182, and histidine 185 together coordinate Zn(2+).

It belongs to the thymidine kinase family. Homotetramer.

Its subcellular location is the cytoplasm. It carries out the reaction thymidine + ATP = dTMP + ADP + H(+). The polypeptide is Thymidine kinase (Haemophilus influenzae (strain ATCC 51907 / DSM 11121 / KW20 / Rd)).